A 1142-amino-acid polypeptide reads, in one-letter code: Serine/threonine-protein kinase dst2 (1142 aa).

Positions 20 to 276 constitute a Protein kinase domain; sequence FELIEEIAEG…ATELLKHPFV (257 aa). Residues 26–34 and lysine 49 contribute to the ATP site; that span reads IAEGSFGTV. The active-site Proton acceptor is aspartate 141. Residues 300 to 322 are compositionally biased toward acidic residues; the sequence is LEEGGDEDEDSSEQEGMDSDDKD. 5 disordered regions span residues 300–492, 515–636, 744–768, 939–974, and 1040–1142; these read LEEG…KTLE, KKQQ…KSTP, ETNH…TEQR, SIEE…GSVT, and EEQK…DNQD. Residues 323–336 show a composition bias toward basic and acidic residues; it reads SDLKKSVGTSDRKS. Residues 355-365 show a composition bias toward polar residues; that stretch reads QRKSTGQNLQL. The span at 371 to 390 shows a compositional bias: low complexity; the sequence is QQSSSSSSSSSSSLSSQSLQ. The span at 391-413 shows a compositional bias: polar residues; that stretch reads PQAVNKSTDRLSANINGSNTKSN. A compositionally biased stretch (low complexity) spans 421–452; the sequence is AAASASASSLNLSTGNLQQSLSGSGSITTNSG. Residues 467-477 show a composition bias toward basic and acidic residues; it reads SSDDRSPDIRT. Positions 541 to 554 are enriched in low complexity; it reads KQNAAKATQQQKQS. Basic and acidic residues-rich tracts occupy residues 555-588, 597-635, 744-760, and 939-969; these read AAKE…KKNQ, KVTD…DKST, ETNH…EQHI, and SIEE…EQKK. The stretch at 716-1050 forms a coiled coil; that stretch reads QEYHTVLREN…EQKKSKLKLK (335 aa). Over residues 1068-1091 the composition is skewed to low complexity; sequence TGTTPPSTSSNQKTLNNSNGASSN.

It belongs to the protein kinase superfamily. STE Ser/Thr protein kinase family. STE20 subfamily. It depends on Mg(2+) as a cofactor.

It catalyses the reaction L-seryl-[protein] + ATP = O-phospho-L-seryl-[protein] + ADP + H(+). It carries out the reaction L-threonyl-[protein] + ATP = O-phospho-L-threonyl-[protein] + ADP + H(+). This chain is Serine/threonine-protein kinase dst2, found in Dictyostelium discoideum (Social amoeba).